Here is a 472-residue protein sequence, read N- to C-terminus: UDP-N-acetylmuramate--L-alanine ligase (472 aa).

118–124 provides a ligand contact to ATP; it reads GTHGKTT.

The protein belongs to the MurCDEF family.

It localises to the cytoplasm. The catalysed reaction is UDP-N-acetyl-alpha-D-muramate + L-alanine + ATP = UDP-N-acetyl-alpha-D-muramoyl-L-alanine + ADP + phosphate + H(+). The protein operates within cell wall biogenesis; peptidoglycan biosynthesis. Functionally, cell wall formation. The protein is UDP-N-acetylmuramate--L-alanine ligase of Methylococcus capsulatus (strain ATCC 33009 / NCIMB 11132 / Bath).